Consider the following 250-residue polypeptide: 5-oxoprolinase subunit A (250 aa).

Belongs to the LamB/PxpA family. Forms a complex composed of PxpA, PxpB and PxpC.

It catalyses the reaction 5-oxo-L-proline + ATP + 2 H2O = L-glutamate + ADP + phosphate + H(+). In terms of biological role, catalyzes the cleavage of 5-oxoproline to form L-glutamate coupled to the hydrolysis of ATP to ADP and inorganic phosphate. The polypeptide is 5-oxoprolinase subunit A (Streptomyces coelicolor (strain ATCC BAA-471 / A3(2) / M145)).